The sequence spans 811 residues: Probable inorganic carbon transporter subunit DabA (811 aa).

The Zn(2+) site is built by cysteine 336, aspartate 338, histidine 498, and cysteine 513.

Belongs to the inorganic carbon transporter (TC 9.A.2) DabA family. In terms of assembly, forms a complex with DabB. Zn(2+) serves as cofactor.

Its subcellular location is the cell inner membrane. Its function is as follows. Part of an energy-coupled inorganic carbon pump. In Azorhizobium caulinodans (strain ATCC 43989 / DSM 5975 / JCM 20966 / LMG 6465 / NBRC 14845 / NCIMB 13405 / ORS 571), this protein is Probable inorganic carbon transporter subunit DabA.